Here is a 1879-residue protein sequence, read N- to C-terminus: Genome polyprotein (1879 aa).

Positions 37–98 are disordered; that stretch reads GPLDHDSRHG…TSTDVVRSGP (62 aa). Residues 38 to 50 show a composition bias toward basic and acidic residues; that stretch reads PLDHDSRHGRDPV. The segment covering 79–93 has biased composition (polar residues); the sequence is SGTNPSHLKPTSTDV. The region spanning 564–720 is the SF3 helicase domain; sequence DNVISCCTRR…ENWKRENPGK (157 aa). Residue 590 to 597 coordinates ATP; sequence GPPGCGKT. O-(5'-phospho-RNA)-tyrosine is present on Tyr1093. The 154-residue stretch at 1188 to 1341 folds into the Peptidase C24 domain; the sequence is GVTHKNAIVS…KLIVPYVKVD (154 aa). Residues His1222, Glu1243, and Cys1305 each act as for 3CLpro activity in the active site. The 126-residue stretch at 1591–1716 folds into the RdRp catalytic domain; that stretch reads HDRYCVDYSK…IVPPLISSVM (126 aa).

As to quaternary structure, homodimer. Interacts with NTPase, protein p30 and protease-polymerase p76. In terms of assembly, interacts with capsid protein VP1 and protease-polymerase p76. Interacts with host IEF4e; this interaction plays a role in translation of viral proteins. Homooligomer. Interacts with Vpg, protein p32 and may interact with capsid protein VP1. Post-translationally, specific enzymatic cleavages in vivo yield mature proteins. Pro-Pol is first autocatalytically cleaved, then processes the whole polyprotein. VPg is uridylylated by the polymerase and is covalently attached to the 5'-end of the polyadenylated genomic and subgenomic RNAs. This uridylylated form acts as a nucleotide-peptide primer for the polymerase.

It is found in the host endoplasmic reticulum membrane. The catalysed reaction is a ribonucleoside 5'-triphosphate + H2O = a ribonucleoside 5'-diphosphate + phosphate + H(+). It catalyses the reaction RNA(n) + a ribonucleoside 5'-triphosphate = RNA(n+1) + diphosphate. It carries out the reaction Endopeptidase with a preference for cleavage when the P1 position is occupied by Glu-|-Xaa and the P1' position is occupied by Gly-|-Yaa.. Together with NTPase and NS4, initiates the formation of the replication complex. Induces the proliferation of the host smooth ER membranes forming long tubular structures. These remodeled membranes probably form the viral factories that contain the replication complex. In terms of biological role, displays NTPase activity, but no helicase activity. Induces the formation of convoluted membranes derived from the host ER. These remodeled membranes probably form the viral factories that contain the replication complex. Together with NS2 and NS4, initiates the formation of the replication complex. Its function is as follows. Probable key protein responsible for the formation of membrane alterations by the virus. Induces the formation of convoluted membranes derived from the host ER. These remodeled membranes probably form the viral factories that contain the replication complex. Together with NS2 and NTPase, initiates the formation of the replication complex. Functionally, viral genome-linked protein is covalently linked to the 5'-end of the positive-strand, negative-strand genomic RNAs and subgenomic RNA. Acts as a genome-linked replication primer. May recruit ribosome to viral RNA thereby promoting viral proteins translation. Interacts with host translation initiation complex to allow the translation of viral proteins. Protease-polymerase p76 processes the polyprotein: Pro-Pol is first released by autocleavage, then all other proteins are cleaved. Cleaves host translation initiation factor eIF4G1, eIF4G2 and PABP1 thereby inducing a shutdown of host protein synthesis. This shutdown may not prevent viral mRNA from being translated since viral Vpg replaces the cap. Also functions as an RNA-directed RNA polymerase, which replicates genomic and antigenomic viral RNA by recognizing specific signals. Also transcribes a subgenomic mRNA by initiating RNA synthesis internally on antigenomic RNA. This sgRNA codes for structural proteins. Catalyzes the covalent attachment VPg with viral RNAs. The protein is Genome polyprotein of Otariidae (fur seals &amp; sea lions).